The primary structure comprises 186 residues: Pyridoxal 5'-phosphate synthase subunit PdxT (186 aa).

46 to 48 (GES) is an L-glutamine binding site. Residue Cys75 is the Nucleophile of the active site. Residues Arg101 and 128–129 (IR) contribute to the L-glutamine site. Active-site charge relay system residues include His165 and Glu167.

The protein belongs to the glutaminase PdxT/SNO family. In the presence of PdxS, forms a dodecamer of heterodimers. Only shows activity in the heterodimer.

The catalysed reaction is aldehydo-D-ribose 5-phosphate + D-glyceraldehyde 3-phosphate + L-glutamine = pyridoxal 5'-phosphate + L-glutamate + phosphate + 3 H2O + H(+). It carries out the reaction L-glutamine + H2O = L-glutamate + NH4(+). Its pathway is cofactor biosynthesis; pyridoxal 5'-phosphate biosynthesis. Catalyzes the hydrolysis of glutamine to glutamate and ammonia as part of the biosynthesis of pyridoxal 5'-phosphate. The resulting ammonia molecule is channeled to the active site of PdxS. In Methanocaldococcus jannaschii (strain ATCC 43067 / DSM 2661 / JAL-1 / JCM 10045 / NBRC 100440) (Methanococcus jannaschii), this protein is Pyridoxal 5'-phosphate synthase subunit PdxT.